The following is a 285-amino-acid chain: Transmembrane protein 53-B (285 aa).

The helical transmembrane segment at 165 to 185 threads the bilayer; sequence FLALAAFAIMVIILRIVLYPV.

This sequence belongs to the TMEM53 family.

The protein resides in the nucleus outer membrane. Functionally, ensures normal bone formation, through the negative regulation of bone morphogenetic protein (BMP) signaling in osteoblast lineage cells by blocking cytoplasm-nucleus translocation of phosphorylated SMAD proteins. The polypeptide is Transmembrane protein 53-B (tmem53-b) (Xenopus laevis (African clawed frog)).